A 623-amino-acid polypeptide reads, in one-letter code: NADPH-dependent diflavin oxidoreductase 1 (623 aa).

A Flavodoxin-like domain is found at 8–153; sequence LLVLYASQTG…TLDPWMLSLW (146 aa). Residues 14–19, 62–65, and Asp135 contribute to the FMN site; these read SQTGNA and STTG. Positions 221–467 constitute an FAD-binding FR-type domain; the sequence is KPDCFLKMTR…SLPAPSQSLP (247 aa). FAD-binding positions include Arg369, 399-402, and 433-436; these read RAFS and GLCS. Residues Thr475, 541–542, 547–551, and Asp583 each bind NADP(+); these read SR and KVYVQ. Residue Trp622 participates in FAD binding.

Belongs to the NADPH-dependent diflavin oxidoreductase NDOR1 family. This sequence in the N-terminal section; belongs to the flavodoxin family. It in the C-terminal section; belongs to the flavoprotein pyridine nucleotide cytochrome reductase family. As to quaternary structure, interacts with At5g18400. FAD is required as a cofactor. The cofactor is FMN. In terms of tissue distribution, widely expressed.

It is found in the cytoplasm. It localises to the nucleus. It carries out the reaction 2 oxidized [2Fe-2S]-[protein] + NADPH = 2 reduced [2Fe-2S]-[protein] + NADP(+) + H(+). In terms of biological role, NADPH-dependent reductase which is a central component of the cytosolic iron-sulfur (Fe-S) protein assembly (CIA) machinery. Transfers electrons from NADPH via its FAD and FMN prosthetic groups to the [2Fe-2S] cluster of the anamorsin/DRE2 homolog, another key component of the CIA machinery. In turn, this reduced cluster provides electrons for assembly of cytosolic iron-sulfur cluster proteins. Catalyzes the NADP-dependent reduction of cytochrome c, but not cytochrome P450 in vitro. Required for embryo development. The polypeptide is NADPH-dependent diflavin oxidoreductase 1 (ATR3) (Arabidopsis thaliana (Mouse-ear cress)).